A 90-amino-acid chain; its full sequence is DNA-binding protein HU-alpha (90 aa).

Belongs to the bacterial histone-like protein family. As to quaternary structure, heterodimer of an alpha and a beta chain.

Histone-like DNA-binding protein which is capable of wrapping DNA to stabilize it, and thus to prevent its denaturation under extreme environmental conditions. This is DNA-binding protein HU-alpha (hupA) from Salmonella typhi.